The sequence spans 284 residues: Nucleoid occlusion protein (284 aa).

The H-T-H motif DNA-binding region spans 143–162 (EALAQRVGKSQSAIANKMRL).

It belongs to the ParB family.

Its subcellular location is the cytoplasm. The protein resides in the nucleoid. In terms of biological role, effects nucleoid occlusion by binding relatively nonspecifically to DNA and preventing the assembly of the division machinery in the vicinity of the nucleoid, especially under conditions that disturb the cell cycle. It helps to coordinate cell division and chromosome segregation by preventing the formation of the Z ring through the nucleoid, which would cause chromosome breakage. This Listeria monocytogenes serovar 1/2a (strain ATCC BAA-679 / EGD-e) protein is Nucleoid occlusion protein.